Here is a 257-residue protein sequence, read N- to C-terminus: Glutamate racemase (257 aa).

Residues 12-13 (DS) and 44-45 (YG) contribute to the substrate site. The active-site Proton donor/acceptor is the Cys75. 76–77 (NT) provides a ligand contact to substrate. Residue Cys185 is the Proton donor/acceptor of the active site. Position 186-187 (186-187 (TH)) interacts with substrate.

Belongs to the aspartate/glutamate racemases family.

The catalysed reaction is L-glutamate = D-glutamate. It functions in the pathway cell wall biogenesis; peptidoglycan biosynthesis. Its function is as follows. Provides the (R)-glutamate required for cell wall biosynthesis. This chain is Glutamate racemase, found in Clostridium botulinum (strain Kyoto / Type A2).